Here is a 465-residue protein sequence, read N- to C-terminus: Neuraminidase (465 aa).

Residues 1–11 (MLPSTIQTLTL) are Intravirion-facing. Residues 12–34 (FLTSGGVLLSLYVSASLSYLLYS) traverse the membrane as a helical segment. Residues 13–35 (LTSGGVLLSLYVSASLSYLLYSD) form an involved in apical transport and lipid raft association region. Residues 35-465 (DILLKFSSKI…DTVTGVDMAL (431 aa)) are Virion surface-facing. Positions 38-85 (LKFSSKITAPTMTLDCANASNVQAVNRSATKEMTFLLPEPEWTYPRLS) are hypervariable stalk region. Residues asparagine 55 and asparagine 63 are each glycosylated (N-linked (GlcNAc...) asparagine; by host). 8 disulfide bridges follow: cysteine 86–cysteine 419, cysteine 121–cysteine 126, cysteine 181–cysteine 228, cysteine 230–cysteine 235, cysteine 276–cysteine 290, cysteine 278–cysteine 288, cysteine 317–cysteine 336, and cysteine 423–cysteine 446. A head of neuraminidase region spans residues 88–465 (GSTFQKALLI…DTVTGVDMAL (378 aa)). Residue arginine 115 participates in substrate binding. Asparagine 143 is a glycosylation site (N-linked (GlcNAc...) asparagine; by host). Aspartate 148 serves as the catalytic Proton donor/acceptor. Residue arginine 149 participates in substrate binding. Residue 274–275 (EE) participates in substrate binding. Residue asparagine 283 is glycosylated (N-linked (GlcNAc...) asparagine; by host). Arginine 291 is a substrate binding site. Aspartate 292, threonine 296, aspartate 323, glycine 343, and glycine 345 together coordinate Ca(2+). A substrate-binding site is contributed by arginine 373. The active-site Nucleophile is tyrosine 408.

The protein belongs to the glycosyl hydrolase 34 family. As to quaternary structure, homotetramer. Ca(2+) serves as cofactor. Post-translationally, N-glycosylated.

The protein localises to the virion membrane. It is found in the host apical cell membrane. The catalysed reaction is Hydrolysis of alpha-(2-&gt;3)-, alpha-(2-&gt;6)-, alpha-(2-&gt;8)- glycosidic linkages of terminal sialic acid residues in oligosaccharides, glycoproteins, glycolipids, colominic acid and synthetic substrates.. Its activity is regulated as follows. Inhibited by the neuraminidase inhibitors zanamivir (Relenza) and oseltamivir (Tamiflu). These drugs interfere with the release of progeny virus from infected cells and are effective against all influenza strains. Resistance to neuraminidase inhibitors is quite rare. In terms of biological role, catalyzes the removal of terminal sialic acid residues from viral and cellular glycoconjugates. Cleaves off the terminal sialic acids on the glycosylated HA during virus budding to facilitate virus release. Additionally helps virus spread through the circulation by further removing sialic acids from the cell surface. These cleavages prevent self-aggregation and ensure the efficient spread of the progeny virus from cell to cell. Otherwise, infection would be limited to one round of replication. Described as a receptor-destroying enzyme because it cleaves a terminal sialic acid from the cellular receptors. May facilitate viral invasion of the upper airways by cleaving the sialic acid moieties on the mucin of the airway epithelial cells. Likely to plays a role in the budding process through its association with lipid rafts during intracellular transport. May additionally display a raft-association independent effect on budding. Plays a role in the determination of host range restriction on replication and virulence. Sialidase activity in late endosome/lysosome traffic seems to enhance virus replication. In Influenza B virus (strain B/Beijing/1/1987), this protein is Neuraminidase.